The chain runs to 445 residues: Histamine H3 receptor (445 aa).

The Extracellular segment spans residues 1–39 (MERAPPDGLMNASGALAGEAAAAGGARGFSAAWTAVLAA). The N-linked (GlcNAc...) asparagine glycan is linked to Asn11. A helical transmembrane segment spans residues 40–60 (LMALLIVATVLGNALVMLAFV). Topologically, residues 61 to 70 (ADSSLRTQNN) are cytoplasmic. Residues 71–91 (FFLLNLAISDFLVGAFCIPLY) traverse the membrane as a helical segment. At 92-108 (VPYVLTGRWTFGRGLCK) the chain is on the extracellular side. A disulfide bond links Cys107 and Cys188. Residues 109 to 129 (LWLVVDYLLCASSVFNIVLIS) traverse the membrane as a helical segment. The Cytoplasmic segment spans residues 130–156 (YDRFLSVTRAVSYRAQQGDTRRAVRKM). The helical transmembrane segment at 157–177 (ALVWVLAFLLYGPAILSWEYL) threads the bilayer. Over 178 to 196 (SGGSSIPEGHCYAEFFYNW) the chain is Extracellular. A helical transmembrane segment spans residues 197–217 (YFLITASTLEFFTPFLSVTFF). Residues 218-359 (NLSIYLNIQR…LSRDKKVAKS (142 aa)) are Cytoplasmic-facing. Disordered stretches follow at residues 234–259 (DGGR…PSCW) and 273–336 (HRYG…LEKR). Residues 241-256 (PEPPPDAQPSPPPAPP) show a composition bias toward pro residues. A compositionally biased stretch (gly residues) spans 289–299 (AGLGGGSGGGA). Residues 300 to 312 (AASPTSSSGSSSR) are compositionally biased toward low complexity. Residues 360–380 (LAIIVSIFGLCWAPYTLLMII) form a helical membrane-spanning segment. Topologically, residues 381–396 (RAACHGHCVPDYWYET) are extracellular. A helical membrane pass occupies residues 397–417 (SFWLLWANSAVNPVLYPLCHY). At 418-445 (SFRRAFTKLLCPQKLKVQPHGSLEQCWK) the chain is on the cytoplasmic side. Ser439 carries the post-translational modification Phosphoserine.

It belongs to the G-protein coupled receptor 1 family.

It localises to the cell membrane. Functionally, the H3 subclass of histamine receptors could mediate the histamine signals in CNS and peripheral nervous system. Signals through the inhibition of adenylate cyclase and displays high constitutive activity (spontaneous activity in the absence of agonist). This is Histamine H3 receptor (Hrh3) from Mus musculus (Mouse).